Here is a 243-residue protein sequence, read N- to C-terminus: MNLIIDIGNTVAKVALFDRTSMVEVVYDSNQSLDSLEAVCNKYDVRKAIVATVIDLNECVLAQLNKLPVPVLWLDSHTPLPVINLYETPETLGYDRMAAVVAAHDQFPGKDILVIDAGTCITYEFVDSLGQYHGGNISPGLWMRLKALHQFTGRLPLVHAEGRMPDMGKDTETAIRAGVKKGIEYEITGYIAAMKHKYPELLVFLTGGDDFSFDTKLKSVIFADRFLVLKGLNRILNYNNGRI.

6-13 (DIGNTVAK) contacts ATP. Residues Y86 and 93 to 96 (GYDR) each bind substrate. Residue D95 is the Proton acceptor of the active site. Residue D116 coordinates K(+). Position 119 (T119) interacts with ATP. T171 provides a ligand contact to substrate.

Belongs to the type III pantothenate kinase family. Homodimer. It depends on NH4(+) as a cofactor. Requires K(+) as cofactor.

It is found in the cytoplasm. The enzyme catalyses (R)-pantothenate + ATP = (R)-4'-phosphopantothenate + ADP + H(+). Its pathway is cofactor biosynthesis; coenzyme A biosynthesis; CoA from (R)-pantothenate: step 1/5. Its function is as follows. Catalyzes the phosphorylation of pantothenate (Pan), the first step in CoA biosynthesis. The chain is Type III pantothenate kinase from Bacteroides fragilis (strain ATCC 25285 / DSM 2151 / CCUG 4856 / JCM 11019 / LMG 10263 / NCTC 9343 / Onslow / VPI 2553 / EN-2).